We begin with the raw amino-acid sequence, 236 residues long: Pyridoxine 5'-phosphate synthase (236 aa).

Residue Asn6 participates in 3-amino-2-oxopropyl phosphate binding. Residue 8–9 (DH) coordinates 1-deoxy-D-xylulose 5-phosphate. Arg17 is a 3-amino-2-oxopropyl phosphate binding site. His42 acts as the Proton acceptor in catalysis. Residues Arg44 and His49 each coordinate 1-deoxy-D-xylulose 5-phosphate. Residue Glu69 is the Proton acceptor of the active site. Thr99 contacts 1-deoxy-D-xylulose 5-phosphate. His190 (proton donor) is an active-site residue. Residues Gly191 and 212–213 (GH) each bind 3-amino-2-oxopropyl phosphate.

It belongs to the PNP synthase family. As to quaternary structure, homooctamer; tetramer of dimers.

It localises to the cytoplasm. The enzyme catalyses 3-amino-2-oxopropyl phosphate + 1-deoxy-D-xylulose 5-phosphate = pyridoxine 5'-phosphate + phosphate + 2 H2O + H(+). The protein operates within cofactor biosynthesis; pyridoxine 5'-phosphate biosynthesis; pyridoxine 5'-phosphate from D-erythrose 4-phosphate: step 5/5. Catalyzes the complicated ring closure reaction between the two acyclic compounds 1-deoxy-D-xylulose-5-phosphate (DXP) and 3-amino-2-oxopropyl phosphate (1-amino-acetone-3-phosphate or AAP) to form pyridoxine 5'-phosphate (PNP) and inorganic phosphate. This chain is Pyridoxine 5'-phosphate synthase, found in Prosthecochloris aestuarii (strain DSM 271 / SK 413).